Consider the following 307-residue polypeptide: Elongation factor Ts (307 aa).

An involved in Mg(2+) ion dislocation from EF-Tu region spans residues 80 to 83; the sequence is TDFV.

It belongs to the EF-Ts family.

The protein localises to the cytoplasm. Its function is as follows. Associates with the EF-Tu.GDP complex and induces the exchange of GDP to GTP. It remains bound to the aminoacyl-tRNA.EF-Tu.GTP complex up to the GTP hydrolysis stage on the ribosome. The chain is Elongation factor Ts from Azorhizobium caulinodans (strain ATCC 43989 / DSM 5975 / JCM 20966 / LMG 6465 / NBRC 14845 / NCIMB 13405 / ORS 571).